Here is a 416-residue protein sequence, read N- to C-terminus: Exodeoxyribonuclease 7 large subunit (416 aa).

The segment at Met-1–Val-21 is disordered.

The protein belongs to the XseA family. Heterooligomer composed of large and small subunits.

Its subcellular location is the cytoplasm. It catalyses the reaction Exonucleolytic cleavage in either 5'- to 3'- or 3'- to 5'-direction to yield nucleoside 5'-phosphates.. In terms of biological role, bidirectionally degrades single-stranded DNA into large acid-insoluble oligonucleotides, which are then degraded further into small acid-soluble oligonucleotides. The sequence is that of Exodeoxyribonuclease 7 large subunit from Deinococcus radiodurans (strain ATCC 13939 / DSM 20539 / JCM 16871 / CCUG 27074 / LMG 4051 / NBRC 15346 / NCIMB 9279 / VKM B-1422 / R1).